The chain runs to 405 residues: uncharacterized protein (405 aa).

Helical transmembrane passes span 32–52, 53–73, 84–104, 108–128, 150–170, 171–191, 237–257, 260–280, 291–311, 314–334, 352–372, and 378–398; these read MFVL…VLAG, WLTF…GVLL, IDMI…WLGW, PVVC…IAGI, AVYS…VGWL, GPEA…VCLS, WGAL…VAAG, VVGL…LLAG, IMTA…AEFG, GLTI…VAML, ISIS…GVVI, and AIFV…LSIP.

Belongs to the major facilitator superfamily.

The protein localises to the cell membrane. This is an uncharacterized protein from Sinorhizobium fredii (strain NBRC 101917 / NGR234).